A 325-amino-acid polypeptide reads, in one-letter code: MNALTAVKTNADSVTRSDAGFTFAPSVQSPRLLELTFSAKTTAQFLQQVEQWPVQALEYKSFLRFKVGQILDALCGNQLQPLLIKTLLDRAEGALLINAEGIDNVEQADEMVKLATAVAHLIGRSNYDAMSGQYYARFVVKNVDNSDSYLRQPHRVMELHNDGTYVEEVTDYVLMMKIDEQNMAGGNSLLLHLDDWEHLERFFSHPLARRSMRFAAPPSKNVSHDVYHPVFDVDQQGRPVMRYIDQFVQPKDFEEGVWLSDLSDALETSKNILSVPVPVGKFLLINNLFWLHGRDRFTPHPDLRRELMRQRGYFAYSTRCYQTHQ.

Residues His-160, Asp-162, and His-292 each contribute to the Fe cation site.

It belongs to the glutarate hydroxylase family. Homotetramer. It depends on Fe(2+) as a cofactor.

It catalyses the reaction glutarate + 2-oxoglutarate + O2 = (S)-2-hydroxyglutarate + succinate + CO2. It participates in amino-acid degradation. In terms of biological role, acts as an alpha-ketoglutarate-dependent dioxygenase catalyzing hydroxylation of glutarate (GA) to L-2-hydroxyglutarate (L2HG). Functions in a L-lysine degradation pathway that proceeds via cadaverine, glutarate and L-2-hydroxyglutarate. This is Glutarate 2-hydroxylase from Citrobacter koseri (strain ATCC BAA-895 / CDC 4225-83 / SGSC4696).